The chain runs to 180 residues: Large ribosomal subunit protein uL6 (180 aa).

It belongs to the universal ribosomal protein uL6 family. In terms of assembly, part of the 50S ribosomal subunit.

In terms of biological role, this protein binds to the 23S rRNA, and is important in its secondary structure. It is located near the subunit interface in the base of the L7/L12 stalk, and near the tRNA binding site of the peptidyltransferase center. The protein is Large ribosomal subunit protein uL6 of Cutibacterium acnes (strain DSM 16379 / KPA171202) (Propionibacterium acnes).